Reading from the N-terminus, the 425-residue chain is MAYNPKILQKPKEGEEITIKDGKLHVPNYPIIPFIEGDGIGSDITPAMIKVVDSAVQKAYKGEKKIAWYEVFVGEKCYQKFKDHKELSPEEQWLLPDTIEAINHYKVSIKGPLTTPIGEGFRSLNVALRQKMDLYVCLRPVRWYGSPSPVKEPQKVDMVIFRENSEDIYAGIEWQEGSAEAKKLIHFLQNELKVEKIRFPESSGVGIKPISKEGTERLVRKAIEYAIDNDKPSVTFVHKGNIMKYTEGAFMKWGYALAQKEFNAQVIDKGPWCSLKNPKTGKEIIIKDMIADAFLQQILLRPSEYSVIATMNLNGDYISDALAAMVGGIGIAPGANLNDTVGMFEATHGTAPKYAGLDKVNPGSIILSAEMMLRHMGWVEAADLIVSAMEKAIKSKKVTYDFARLMDGAKEVKCSEFASVMIENM.

T114 contributes to the NADP(+) binding site. Residues S123, N125, R129, R139, and R162 each coordinate D-threo-isocitrate. Residue D316 participates in Mg(2+) binding. NADP(+)-binding positions include 348 to 354 (HGTAPKY), N361, Y400, and R404.

Belongs to the isocitrate and isopropylmalate dehydrogenases family. In terms of assembly, homodimer. It depends on Mg(2+) as a cofactor. Mn(2+) is required as a cofactor.

It catalyses the reaction D-threo-isocitrate + NADP(+) = 2-oxoglutarate + CO2 + NADPH. Functionally, catalyzes the oxidative decarboxylation of isocitrate to 2-oxoglutarate and carbon dioxide with the concomitant reduction of NADP(+). The polypeptide is Isocitrate dehydrogenase [NADP] (icd) (Helicobacter pylori (strain J99 / ATCC 700824) (Campylobacter pylori J99)).